The chain runs to 213 residues: Imidazole glycerol phosphate synthase subunit HisH (213 aa).

The 208-residue stretch at 4 to 211 (NIGLIDYGMG…LAWLKKETKD (208 aa)) folds into the Glutamine amidotransferase type-1 domain. Cysteine 82 serves as the catalytic Nucleophile. Catalysis depends on residues histidine 186 and glutamate 188.

As to quaternary structure, heterodimer of HisH and HisF.

The protein resides in the cytoplasm. The catalysed reaction is 5-[(5-phospho-1-deoxy-D-ribulos-1-ylimino)methylamino]-1-(5-phospho-beta-D-ribosyl)imidazole-4-carboxamide + L-glutamine = D-erythro-1-(imidazol-4-yl)glycerol 3-phosphate + 5-amino-1-(5-phospho-beta-D-ribosyl)imidazole-4-carboxamide + L-glutamate + H(+). The enzyme catalyses L-glutamine + H2O = L-glutamate + NH4(+). The protein operates within amino-acid biosynthesis; L-histidine biosynthesis; L-histidine from 5-phospho-alpha-D-ribose 1-diphosphate: step 5/9. Functionally, IGPS catalyzes the conversion of PRFAR and glutamine to IGP, AICAR and glutamate. The HisH subunit catalyzes the hydrolysis of glutamine to glutamate and ammonia as part of the synthesis of IGP and AICAR. The resulting ammonia molecule is channeled to the active site of HisF. This chain is Imidazole glycerol phosphate synthase subunit HisH, found in Prochlorococcus marinus (strain SARG / CCMP1375 / SS120).